A 273-amino-acid polypeptide reads, in one-letter code: tRNA pseudouridine synthase B (273 aa).

Residue Asp38 is the Nucleophile of the active site.

The protein belongs to the pseudouridine synthase TruB family. Type 1 subfamily.

It catalyses the reaction uridine(55) in tRNA = pseudouridine(55) in tRNA. Its function is as follows. Responsible for synthesis of pseudouridine from uracil-55 in the psi GC loop of transfer RNAs. The chain is tRNA pseudouridine synthase B from Campylobacter curvus (strain 525.92).